The chain runs to 412 residues: Proline-rich protein 30 (412 aa).

Positions H33–R45 are enriched in polar residues. Disordered regions lie at residues H33 to S75, P123 to Q174, and P318 to V412. Composition is skewed to low complexity over residues P126–P142 and P334–A350. Positions T353–R372 are enriched in polar residues.

The chain is Proline-rich protein 30 (PRR30) from Macaca fascicularis (Crab-eating macaque).